The primary structure comprises 549 residues: Hydroxylamine reductase (549 aa).

Residues cysteine 5, cysteine 8, cysteine 17, and cysteine 23 each coordinate [4Fe-4S] cluster. Hybrid [4Fe-2O-2S] cluster-binding residues include histidine 250, glutamate 274, cysteine 318, cysteine 404, cysteine 432, cysteine 457, glutamate 491, and lysine 493. Cysteine 404 carries the post-translational modification Cysteine persulfide.

The protein belongs to the HCP family. [4Fe-4S] cluster is required as a cofactor. Hybrid [4Fe-2O-2S] cluster serves as cofactor.

It localises to the cytoplasm. The catalysed reaction is A + NH4(+) + H2O = hydroxylamine + AH2 + H(+). In terms of biological role, catalyzes the reduction of hydroxylamine to form NH(3) and H(2)O. The protein is Hydroxylamine reductase of Geobacter metallireducens (strain ATCC 53774 / DSM 7210 / GS-15).